The following is a 419-amino-acid chain: Gamma-glutamyl phosphate reductase (419 aa).

This sequence belongs to the gamma-glutamyl phosphate reductase family.

Its subcellular location is the cytoplasm. It carries out the reaction L-glutamate 5-semialdehyde + phosphate + NADP(+) = L-glutamyl 5-phosphate + NADPH + H(+). It participates in amino-acid biosynthesis; L-proline biosynthesis; L-glutamate 5-semialdehyde from L-glutamate: step 2/2. Its function is as follows. Catalyzes the NADPH-dependent reduction of L-glutamate 5-phosphate into L-glutamate 5-semialdehyde and phosphate. The product spontaneously undergoes cyclization to form 1-pyrroline-5-carboxylate. This is Gamma-glutamyl phosphate reductase from Yersinia pestis.